The sequence spans 859 residues: MTKSNADLSAHTPMMQQYWKLKREHPDQLMFYRMGDFYELFYDDAKKAAALLDITLTARGQSAGTAIPMAGIPFHSAEGYLARLVKLGESVVICEQIGDPATSKGPVERQVVRIITPGTVSDEALLDERRDNLLAAVVGDEKLFGLSVLDIASGRFSVQELKGWETLLAELERLSPAELLIPDDWPQGLPLEKRRGVRRRAPWDFDRDSAFKSLCQQFSTQDLKGFGCENLTLAIGAAGCLLAYAKETQRTALPHLRSLRHERLDDTVILDGASRRNLELDVNLAGGRENTLQSVMDRCQTAMGSRLLTRWLNRPLRNREILEARQDSITCLLEHYRFEQLQPQLKDIGDLERILARIGLRNARPRDLARLRDALAALPQLQAGMQDLVAPHLLGLAKSIGTYPELADLLARAIIDNPPAVIRDGGVLKTGYDAELDELQSLSENAGQYLMDLETREKARTGLANLKVGYNRVHGYFIELPSKQAESAPADYIRRQTLKGAERFITPELKEFEDKALSAKSRALAREKLLYDELLEMLIGHLAPLQESAAALAELDVLSNLAERALNLDLNRPRFVEQPCLRIEQGRHPVVEQVLETPFVANDLALDDATRMLVITGPNMGGKSTYMRQTALIVLLAQIGSFVPAAACELSLVDRIFTRIGSSDDLAGGRSTFMVEMSETANILHNASDRSLVLMDEVGRGTSTFDGLSLAWAAAEQLARLRAFTLFATHYFELTVLPESEPVVANVHLSATEHNERIVFLHHVLPGPASQSYGLAVAQLAGVPGEVIQRARDHLSRLETTSLPHEAPRMAPGQPAPPMQSDLFASLPHPVLEELGRINPDDVTPRQALELLYSLKSRI.

Position 617–624 (617–624) interacts with ATP; it reads GPNMGGKS.

It belongs to the DNA mismatch repair MutS family.

In terms of biological role, this protein is involved in the repair of mismatches in DNA. It is possible that it carries out the mismatch recognition step. This protein has a weak ATPase activity. The protein is DNA mismatch repair protein MutS of Stutzerimonas stutzeri (strain A1501) (Pseudomonas stutzeri).